Here is a 258-residue protein sequence, read N- to C-terminus: Aspartate/glutamate leucyltransferase (258 aa).

The protein belongs to the R-transferase family. Bpt subfamily.

It localises to the cytoplasm. The catalysed reaction is N-terminal L-glutamyl-[protein] + L-leucyl-tRNA(Leu) = N-terminal L-leucyl-L-glutamyl-[protein] + tRNA(Leu) + H(+). It catalyses the reaction N-terminal L-aspartyl-[protein] + L-leucyl-tRNA(Leu) = N-terminal L-leucyl-L-aspartyl-[protein] + tRNA(Leu) + H(+). Its function is as follows. Functions in the N-end rule pathway of protein degradation where it conjugates Leu from its aminoacyl-tRNA to the N-termini of proteins containing an N-terminal aspartate or glutamate. This Rhodopseudomonas palustris (strain BisB18) protein is Aspartate/glutamate leucyltransferase.